A 120-amino-acid polypeptide reads, in one-letter code: Large ribosomal subunit protein bL20 (120 aa).

Belongs to the bacterial ribosomal protein bL20 family.

In terms of biological role, binds directly to 23S ribosomal RNA and is necessary for the in vitro assembly process of the 50S ribosomal subunit. It is not involved in the protein synthesizing functions of that subunit. The chain is Large ribosomal subunit protein bL20 from Karelsulcia muelleri (strain GWSS) (Sulcia muelleri).